The primary structure comprises 361 residues: Aminomethyltransferase (361 aa).

This sequence belongs to the GcvT family. The glycine cleavage system is composed of four proteins: P, T, L and H.

It catalyses the reaction N(6)-[(R)-S(8)-aminomethyldihydrolipoyl]-L-lysyl-[protein] + (6S)-5,6,7,8-tetrahydrofolate = N(6)-[(R)-dihydrolipoyl]-L-lysyl-[protein] + (6R)-5,10-methylene-5,6,7,8-tetrahydrofolate + NH4(+). Functionally, the glycine cleavage system catalyzes the degradation of glycine. The chain is Aminomethyltransferase from Phocaeicola vulgatus (strain ATCC 8482 / DSM 1447 / JCM 5826 / CCUG 4940 / NBRC 14291 / NCTC 11154) (Bacteroides vulgatus).